We begin with the raw amino-acid sequence, 285 residues long: Ribosomal protein L11 methyltransferase (285 aa).

Residues threonine 131, glycine 154, aspartate 176, and asparagine 223 each coordinate S-adenosyl-L-methionine.

Belongs to the methyltransferase superfamily. PrmA family.

The protein localises to the cytoplasm. It carries out the reaction L-lysyl-[protein] + 3 S-adenosyl-L-methionine = N(6),N(6),N(6)-trimethyl-L-lysyl-[protein] + 3 S-adenosyl-L-homocysteine + 3 H(+). Its function is as follows. Methylates ribosomal protein L11. The sequence is that of Ribosomal protein L11 methyltransferase from Brucella suis (strain ATCC 23445 / NCTC 10510).